A 90-amino-acid chain; its full sequence is UPF0235 protein CPn_0497/CP_0257/CPj0497/CpB0517 (90 aa).

Belongs to the UPF0235 family.

In Chlamydia pneumoniae (Chlamydophila pneumoniae), this protein is UPF0235 protein CPn_0497/CP_0257/CPj0497/CpB0517.